A 155-amino-acid chain; its full sequence is Large ribosomal subunit protein uL22 (155 aa).

It belongs to the universal ribosomal protein uL22 family. As to quaternary structure, part of the 50S ribosomal subunit.

This protein binds specifically to 23S rRNA. It makes multiple contacts with different domains of the 23S rRNA in the assembled 50S subunit and ribosome. Its function is as follows. The globular domain of the protein is located near the polypeptide exit tunnel on the outside of the subunit, while an extended beta-hairpin is found that lines the wall of the exit tunnel in the center of the 70S ribosome. In Pyrococcus abyssi (strain GE5 / Orsay), this protein is Large ribosomal subunit protein uL22.